A 276-amino-acid chain; its full sequence is Diaminopimelate epimerase (276 aa).

Substrate-binding residues include Asn13, Gln46, and Asn66. Cys75 functions as the Proton donor in the catalytic mechanism. Residues 76–77 (GN), Asn159, Asn192, and 210–211 (ER) each bind substrate. Cys219 acts as the Proton acceptor in catalysis. 220 to 221 (GT) contacts substrate.

It belongs to the diaminopimelate epimerase family. As to quaternary structure, homodimer.

It localises to the cytoplasm. It catalyses the reaction (2S,6S)-2,6-diaminopimelate = meso-2,6-diaminopimelate. It functions in the pathway amino-acid biosynthesis; L-lysine biosynthesis via DAP pathway; DL-2,6-diaminopimelate from LL-2,6-diaminopimelate: step 1/1. Its function is as follows. Catalyzes the stereoinversion of LL-2,6-diaminopimelate (L,L-DAP) to meso-diaminopimelate (meso-DAP), a precursor of L-lysine and an essential component of the bacterial peptidoglycan. The sequence is that of Diaminopimelate epimerase from Pseudomonas aeruginosa (strain LESB58).